The following is a 273-amino-acid chain: Tryptophan synthase alpha chain (273 aa).

Active-site proton acceptor residues include E49 and D60.

Belongs to the TrpA family. In terms of assembly, tetramer of two alpha and two beta chains.

It carries out the reaction (1S,2R)-1-C-(indol-3-yl)glycerol 3-phosphate + L-serine = D-glyceraldehyde 3-phosphate + L-tryptophan + H2O. It functions in the pathway amino-acid biosynthesis; L-tryptophan biosynthesis; L-tryptophan from chorismate: step 5/5. The alpha subunit is responsible for the aldol cleavage of indoleglycerol phosphate to indole and glyceraldehyde 3-phosphate. The sequence is that of Tryptophan synthase alpha chain from Albidiferax ferrireducens (strain ATCC BAA-621 / DSM 15236 / T118) (Rhodoferax ferrireducens).